The chain runs to 138 residues: Putative thioredoxin-like protein 453L (138 aa).

The Thioredoxin domain maps to Gln-3–Gly-138. Catalysis depends on nucleophile residues Cys-44 and Cys-47. Cys-44 and Cys-47 form a disulfide bridge.

It belongs to the thioredoxin family.

Functionally, participates in various redox reactions through the reversible oxidation of its active center dithiol to a disulfide and catalyzes dithiol-disulfide exchange reactions. The chain is Putative thioredoxin-like protein 453L from Acheta domesticus (House cricket).